Reading from the N-terminus, the 222-residue chain is 7-cyano-7-deazaguanine synthase (222 aa).

Position 7–17 (7–17 (LSGGMDSAVAT)) interacts with ATP. 4 residues coordinate Zn(2+): cysteine 188, cysteine 196, cysteine 199, and cysteine 202.

It belongs to the QueC family. Requires Zn(2+) as cofactor.

It catalyses the reaction 7-carboxy-7-deazaguanine + NH4(+) + ATP = 7-cyano-7-deazaguanine + ADP + phosphate + H2O + H(+). It functions in the pathway purine metabolism; 7-cyano-7-deazaguanine biosynthesis. Its function is as follows. Catalyzes the ATP-dependent conversion of 7-carboxy-7-deazaguanine (CDG) to 7-cyano-7-deazaguanine (preQ(0)). The polypeptide is 7-cyano-7-deazaguanine synthase (Methanothermobacter thermautotrophicus (strain ATCC 29096 / DSM 1053 / JCM 10044 / NBRC 100330 / Delta H) (Methanobacterium thermoautotrophicum)).